We begin with the raw amino-acid sequence, 163 residues long: NADH-quinone oxidoreductase subunit I (163 aa).

2 4Fe-4S ferredoxin-type domains span residues Leu53 to Gly83 and Val94 to Asn123. The [4Fe-4S] cluster site is built by Cys63, Cys66, Cys69, Cys73, Cys103, Cys106, Cys109, and Cys113.

This sequence belongs to the complex I 23 kDa subunit family. NDH-1 is composed of 14 different subunits. Subunits NuoA, H, J, K, L, M, N constitute the membrane sector of the complex. Requires [4Fe-4S] cluster as cofactor.

Its subcellular location is the cell inner membrane. It carries out the reaction a quinone + NADH + 5 H(+)(in) = a quinol + NAD(+) + 4 H(+)(out). Its function is as follows. NDH-1 shuttles electrons from NADH, via FMN and iron-sulfur (Fe-S) centers, to quinones in the respiratory chain. The immediate electron acceptor for the enzyme in this species is believed to be ubiquinone. Couples the redox reaction to proton translocation (for every two electrons transferred, four hydrogen ions are translocated across the cytoplasmic membrane), and thus conserves the redox energy in a proton gradient. In Chelativorans sp. (strain BNC1), this protein is NADH-quinone oxidoreductase subunit I.